Here is a 711-residue protein sequence, read N- to C-terminus: Pentatricopeptide repeat-containing protein At5g46580, chloroplastic (711 aa).

The transit peptide at 1 to 43 (MATVLTTAIDVCFNPQNSDTKKHSLFLKPSLFRQSRSRKLNIS) directs the protein to the chloroplast. PPR repeat units lie at residues 185-219 (ETIF…GVEL), 220-254 (DNIT…GLMP), 255-289 (DEVT…GWKP), 290-324 (DAIA…DVKP), 325-359 (NVVV…GLTP), 360-394 (NEKT…KWPM), 395-425 (DFIL…MKES), 431-465 (DNFS…GVQV), 466-500 (NVMG…GVKP), and 501-535 (DDRL…NKKL). The region spanning 614–696 (LDVRSLSVGA…IFVATKEDLV (83 aa)) is the Smr domain.

The protein belongs to the PPR family. P subfamily.

The protein localises to the plastid. It localises to the chloroplast. This is Pentatricopeptide repeat-containing protein At5g46580, chloroplastic from Arabidopsis thaliana (Mouse-ear cress).